Reading from the N-terminus, the 235-residue chain is Casparian strip membrane protein 2 (235 aa).

At 1–70 the chain is on the cytoplasmic side; the sequence is MTSESATVIQ…RSGAEGFRRC (70 aa). A helical membrane pass occupies residues 71–91; sequence LAVIDFLLRVAAFGPTLAAAI. Residues 92-118 are Extracellular-facing; it reads STGTADERLSVFTNFFQFHARFDDFPA. Residues 119 to 139 form a helical membrane-spanning segment; the sequence is FTFFLVANAVAAGYLVLSLPF. Topologically, residues 140–162 are cytoplasmic; it reads SVVVILRPNKATGGVRLLLLLCD. The helical transmembrane segment at 163–183 threads the bilayer; the sequence is VLIMALLTAAGAAAAAIVYVA. Over 184 to 210 the chain is Extracellular; the sequence is HSGNRRANWVPICMQFHGFCQRTSGSV. The chain crosses the membrane as a helical span at residues 211–231; sequence VATFLAVLVFIVLILMAACVI. Residues 232-235 are Cytoplasmic-facing; it reads RRSK.

It belongs to the Casparian strip membrane proteins (CASP) family. In terms of assembly, homodimer and heterodimers.

The protein resides in the cell membrane. In terms of biological role, regulates membrane-cell wall junctions and localized cell wall deposition. Required for establishment of the Casparian strip membrane domain (CSD) and the subsequent formation of Casparian strips, a cell wall modification of the root endodermis that determines an apoplastic barrier between the intraorganismal apoplasm and the extraorganismal apoplasm and prevents lateral diffusion. This is Casparian strip membrane protein 2 from Sorghum bicolor (Sorghum).